The chain runs to 302 residues: Putative 2-dehydro-3-deoxy-D-gluconate aldolase YagE (302 aa).

Catalysis depends on charge relay system residues S49 and Y112. Catalysis depends on Y138, which acts as the Proton donor. K167 acts as the Schiff-base intermediate with substrate in catalysis.

Belongs to the DapA family. A dimer of dimers.

The protein localises to the cytoplasm. It catalyses the reaction 2-dehydro-3-deoxy-D-gluconate = D-glyceraldehyde + pyruvate. The enzyme catalyses 2-dehydro-3-deoxy-D-arabinonate = glycolaldehyde + pyruvate. Catalyzes the formation of 2-keto-3-deoxy-gluconate (KDG) from pyruvate and glyceraldehyde. May also function as a 2-dehydro-3-deoxy-D-pentonate aldolase. Overexpression leads to increased growth (over 2 hours) in the presence of the antibiotics norfloxacin, ampicillin and streptomycin. The sequence is that of Putative 2-dehydro-3-deoxy-D-gluconate aldolase YagE (yagE) from Escherichia coli (strain K12).